The chain runs to 879 residues: Phosphoenolpyruvate carboxylase (879 aa).

Catalysis depends on residues H138 and K545.

It belongs to the PEPCase type 1 family. Mg(2+) is required as a cofactor.

The enzyme catalyses oxaloacetate + phosphate = phosphoenolpyruvate + hydrogencarbonate. Its function is as follows. Forms oxaloacetate, a four-carbon dicarboxylic acid source for the tricarboxylic acid cycle. This chain is Phosphoenolpyruvate carboxylase, found in Haemophilus influenzae (strain 86-028NP).